A 995-amino-acid chain; its full sequence is DExH-box ATP-dependent RNA helicase DExH10 (995 aa).

A disordered region spans residues 1–42 (MSAQMEEPETLGKRKESESSKLRSDETPTPEPRTKRRSLKRA). An N-acetylserine modification is found at serine 2. Residues 10-26 (TLGKRKESESSKLRSDE) are compositionally biased toward basic and acidic residues. Positions 90 to 246 (VACLERKESI…WICYLHKQPC (157 aa)) constitute a Helicase ATP-binding domain. Residue 103-110 (AHTSAGKT) participates in ATP binding. The DEIH box signature appears at 194 to 197 (DEIH). The tract at residues 290 to 318 (DTFPKPKSNDGKKSANGKSGGRGAKGGGG) is disordered. Positions 307 to 318 (KSGGRGAKGGGG) are enriched in gly residues. The region spanning 323–524 (DVYKIVKMIM…LSYYTILNLL (202 aa)) is the Helicase C-terminal domain.

This sequence belongs to the DExH box helicase family. SKI2 subfamily. In terms of tissue distribution, expressed in inflorescences, leaves, stems, and roots.

The protein resides in the nucleus. It is found in the nucleoplasm. The enzyme catalyses ATP + H2O = ADP + phosphate + H(+). In terms of biological role, ATP-dependent RNA helicase that associates with the RNA exosome complex, with the cap binding complex (CBC) and with the NEXT-like complex. Involved in the degradation of a large number of non-coding nuclear exosome substrates such as snoRNA and miRNA precursors, incompletely spliced mRNAs, and spurious transcripts produced from pseudogenes and intergenic regions. Involved in the maintenance of homeotic B and C gene expression in the reproductive whorls. Regulates floral organ spacing and identity, probably through the regulation of protein synthesis or mRNA degradation. In Arabidopsis thaliana (Mouse-ear cress), this protein is DExH-box ATP-dependent RNA helicase DExH10.